Here is a 343-residue protein sequence, read N- to C-terminus: MTQEIDEKIPVYRNWHELIRPEKVEIDQSNHSETYGKFICQPLERGFATTIGNSLRRILLSSIQGAAITTVKIEGALHELTSMKDVKEDVSEIILNLKQVRLKLNCEESQTVRIEKQGPGPVVAGDIIPSAFVEIMNEDHILCNLTSDMTFCAELTVEWGKGYQPAENQEKDDLTVGQIPIDAIFTPVKKIQYVVSSARVGQQTDYDKLTYEIETDGSVRPEDALAYSAKILKEQLDIFINFDETAVEPEKKAVETEEKQENPYLDKPVEDLELSVRSANCLKNADINFIGDLVQRTDQEMLKTKNFGRKSLNEIKTLLQDMDLTLGVKLEGWNAPSDAETEE.

The alpha N-terminal domain (alpha-NTD) stretch occupies residues 1–243; the sequence is MTQEIDEKIP…EQLDIFINFD (243 aa). The interval 261–343 is alpha C-terminal domain (alpha-CTD); the sequence is ENPYLDKPVE…NAPSDAETEE (83 aa).

This sequence belongs to the RNA polymerase alpha chain family. As to quaternary structure, homodimer. The RNAP catalytic core consists of 2 alpha, 1 beta, 1 beta' and 1 omega subunit. When a sigma factor is associated with the core the holoenzyme is formed, which can initiate transcription.

The catalysed reaction is RNA(n) + a ribonucleoside 5'-triphosphate = RNA(n+1) + diphosphate. Its function is as follows. DNA-dependent RNA polymerase catalyzes the transcription of DNA into RNA using the four ribonucleoside triphosphates as substrates. This chain is DNA-directed RNA polymerase subunit alpha, found in Desulfotalea psychrophila (strain LSv54 / DSM 12343).